A 501-amino-acid polypeptide reads, in one-letter code: CUGBP Elav-like family member 1 (501 aa).

Residues 2-196 (NGSLDHPDQP…DTQKDKEQKR (195 aa)) are binds strongly to URE. 2 consecutive RRM domains span residues 16-99 (IKMF…PADS) and 108-188 (RKLF…FADT). Low complexity-rich tracts occupy residues 274–298 (PTGS…TPSG) and 312–323 (SSPTSSTSSSVN). The tract at residues 274–323 (PTGSSALTTSSSPLSVLTSSGTPSGQPAQSAWDAYKAGSSPTSSTSSSVN) is disordered. Residues 397–501 (LLSQQNVSAA…KRSKNDSKPY (105 aa)) are binds strongly to URE. The region spanning 416 to 494 (ANLFIYHLPQ…KRLKVQLKRS (79 aa)) is the RRM 3 domain.

Belongs to the CELF/BRUNOL family.

It localises to the nucleus. The protein resides in the cytoplasm. In terms of biological role, RNA-binding protein implicated in the regulation of several post-transcriptional events. May be involved in mRNA translation activation and stability. Involved in the regulation of muscle-specific splicing of alpha actinin pre-mRNAs via the binding to the UR-repeat element (URE) at the branch point of the non-muscle (NM) exon. The protein is CUGBP Elav-like family member 1 (celf1) of Danio rerio (Zebrafish).